The primary structure comprises 425 residues: Decarboxylase flvG (425 aa).

The residue at position 82 (K82) is an N6-(pyridoxal phosphate)lysine. Residues S213, G250, and 281–284 (EPGR) each bind pyridoxal 5'-phosphate. Substrate is bound at residue 331–332 (FE). C365 acts as the Proton donor; shared with dimeric partner in catalysis. A substrate-binding site is contributed by D366. Residue Y395 participates in pyridoxal 5'-phosphate binding.

The protein belongs to the Orn/Lys/Arg decarboxylase class-II family. As to quaternary structure, homodimer. Only the dimer is catalytically active, as the active sites are constructed of residues from both monomers. Requires pyridoxal 5'-phosphate as cofactor.

The protein localises to the cytoplasm. It catalyses the reaction N(6),N(6)-dimethyl-L-lysine + H(+) = N,N-dimethyl-cadaverine + CO2. It functions in the pathway secondary metabolite biosynthesis; terpenoid biosynthesis. In terms of biological role, decarboxylase; part of the gene cluster that mediates the biosynthesis of flavunoidine, an alkaloidal terpenoid with a tetracyclic cage-like core connected to dimethylcadaverine via a C-N bond and acylated with 5,5-dimethyl-L-pipecolate. The tetracyclic core is synthesized by the terpene cyclase flvE and the cytochrome P450 monooxygenase flvD. The terpene cyclase flvE catalyzes the cyclization of farnesyl pyrophosphate (FPP) to form (1R,4R,5S)-(+)-acoradiene and the cytochrome P450 monooxygenase flvD is then responsible for oxidative conversion of (1R,4R,5S)-(+)-acoradiene into the tetracyclic cage present in the final product flavunoidine. In parallel, the N-methyltransferase flvH dimethylates L-lysine to give N,N-dimethyl-L-Lysin which is decarboxylated by flvG to afford dimethylcadaverine. The terpene cyclase-like protein flvF is the enzyme that attaches the dimethylcadaverine precusor at the C-7 of the tetracyclic cage to yield pre-flavunoidine. The cytochrome monooxygenase flvC hydroxylates the C-10 position of pre-flavunoidine whereas the NRPS flvI acylates the terpenoid core at the hydroxylated C-10 with dimethylpipecolate to yield final flavunoidine. The bifunctional enzyme flvA and the dehydrogenase flvB are responsible for the synthesis of the dimethylpipecolate precursor. The PLP-dependent lyase domain of flvA might use L-O-acetyl-homoserine and alpha-keto-isovalerate to form an intermediary ketone that can cyclize intramolecularly to yield an imine. The imine can be reduced by flvB to yield the 6-carboxylated pipecolate. The C-terminal alpha-KG-dependent oxygenase domain of flvA is then proposed to catalyze the decarboxylation to yield dimethylpipecolate. The polypeptide is Decarboxylase flvG (Aspergillus flavus (strain ATCC 200026 / FGSC A1120 / IAM 13836 / NRRL 3357 / JCM 12722 / SRRC 167)).